The sequence spans 92 residues: Putative septation protein SpoVG (92 aa).

Belongs to the SpoVG family.

Its function is as follows. Could be involved in septation. This chain is Putative septation protein SpoVG, found in Clostridioides difficile (strain 630) (Peptoclostridium difficile).